The sequence spans 416 residues: Squamosa promoter-binding-like protein 8 (416 aa).

The segment at 11 to 51 is disordered; sequence SSCDDFGYNATPPPPPSLLPIMDQDGGGGSIQRDHHQHHNH. An SBP-type zinc finger spans residues 182–260; that stretch reads PPRCQAEGCK…ADHNRRRRKS (79 aa). Cys185, Cys190, Cys207, His210, Cys227, Cys230, His234, and Cys246 together coordinate Zn(2+). Positions 243 to 259 match the Bipartite nuclear localization signal motif; that stretch reads KKSCRKRLADHNRRRRK. Residues 250-299 form a disordered region; it reads LADHNRRRRKSKPSDGEHSGEKRRAQANKSAATKDKAGSSSKNAGIGDGF. Residues 261–273 show a composition bias toward basic and acidic residues; the sequence is KPSDGEHSGEKRR.

As to expression, expressed in stems, leaf sheaths, and young panicles. Weakly expressed in ligules, auricles, and leaf sheaths at the basal region.

Its subcellular location is the nucleus. Probable transcription factor that plays an important role in building the laminar joint between leaf blade and leaf sheath boundary, thereby controlling ligule and auricle development. This is Squamosa promoter-binding-like protein 8 (SPL8) from Oryza sativa subsp. japonica (Rice).